Here is a 297-residue protein sequence, read N- to C-terminus: Phosphatidylserine decarboxylase proenzyme (297 aa).

Catalysis depends on charge relay system; for autoendoproteolytic cleavage activity residues D92, H149, and S254. Catalysis depends on S254, which acts as the Schiff-base intermediate with substrate; via pyruvic acid; for decarboxylase activity. Residue S254 is modified to Pyruvic acid (Ser); by autocatalysis.

It belongs to the phosphatidylserine decarboxylase family. PSD-B subfamily. Prokaryotic type I sub-subfamily. As to quaternary structure, heterodimer of a large membrane-associated beta subunit and a small pyruvoyl-containing alpha subunit. The cofactor is pyruvate. Post-translationally, is synthesized initially as an inactive proenzyme. Formation of the active enzyme involves a self-maturation process in which the active site pyruvoyl group is generated from an internal serine residue via an autocatalytic post-translational modification. Two non-identical subunits are generated from the proenzyme in this reaction, and the pyruvate is formed at the N-terminus of the alpha chain, which is derived from the carboxyl end of the proenzyme. The autoendoproteolytic cleavage occurs by a canonical serine protease mechanism, in which the side chain hydroxyl group of the serine supplies its oxygen atom to form the C-terminus of the beta chain, while the remainder of the serine residue undergoes an oxidative deamination to produce ammonia and the pyruvoyl prosthetic group on the alpha chain. During this reaction, the Ser that is part of the protease active site of the proenzyme becomes the pyruvoyl prosthetic group, which constitutes an essential element of the active site of the mature decarboxylase.

It localises to the cell membrane. It carries out the reaction a 1,2-diacyl-sn-glycero-3-phospho-L-serine + H(+) = a 1,2-diacyl-sn-glycero-3-phosphoethanolamine + CO2. Its pathway is phospholipid metabolism; phosphatidylethanolamine biosynthesis; phosphatidylethanolamine from CDP-diacylglycerol: step 2/2. Its function is as follows. Catalyzes the formation of phosphatidylethanolamine (PtdEtn) from phosphatidylserine (PtdSer). In Bordetella bronchiseptica (strain ATCC BAA-588 / NCTC 13252 / RB50) (Alcaligenes bronchisepticus), this protein is Phosphatidylserine decarboxylase proenzyme.